A 275-amino-acid chain; its full sequence is Lectin (275 aa).

Positions 1–30 (MASLQTQMISFYAIFLSILLTTILFFKVNS) are cleaved as a signal peptide. Mn(2+) contacts are provided by E149 and D151. Ca(2+) is bound by residues D151, F153, N155, and D159. Residues D159 and H166 each coordinate Mn(2+). Residue N217 is glycosylated (N-linked (GlcNAc...) asparagine).

This sequence belongs to the leguminous lectin family. In terms of assembly, tetramer of two alpha and two beta chains.

D-mannose specific lectin. The protein is Lectin (LECA) of Pisum sativum (Garden pea).